The primary structure comprises 135 residues: Large ribosomal subunit protein bL12c (135 aa).

Belongs to the bacterial ribosomal protein bL12 family. Homodimer. Part of the ribosomal stalk of the 50S ribosomal subunit. Forms a multimeric L10(L12)X complex, where L10 forms an elongated spine to which 2 to 4 L12 dimers bind in a sequential fashion. Binds GTP-bound translation factors.

It is found in the plastid. Its subcellular location is the chloroplast. Functionally, forms part of the ribosomal stalk which helps the ribosome interact with GTP-bound translation factors. Is thus essential for accurate translation. The sequence is that of Large ribosomal subunit protein bL12c from Chara vulgaris (Common stonewort).